Here is a 3259-residue protein sequence, read N- to C-terminus: Striated muscle-specific serine/threonine-protein kinase (3259 aa).

The segment at 1–30 (MQKARGTRGEDAGTRAPPSPGVPPKRAKVG) is disordered. Arg33 is modified (omega-N-methylarginine). Residues 45–126 (PVFLRPLKNA…GKASCEAVLT (82 aa)) form the Ig-like 1 domain. Phosphoserine is present on Ser141. 4 disordered regions span residues 155-185 (RAFS…TSEE), 198-226 (EQEA…GPRH), 278-716 (PSGL…DDSY), and 816-880 (VRPG…KVSL). Polar residues predominate over residues 158–185 (STPTGGSDTLVGTSLDTPPTSVTGTSEE). Residues 301 to 317 (PALPPPSKSALLPPPSP) show a composition bias toward pro residues. Ser368 and Ser375 each carry phosphoserine. A Phosphothreonine modification is found at Thr379. A phosphoserine mark is found at Ser382 and Ser385. The span at 404–422 (ILDKLQFFEERRRSLERSD) shows a compositional bias: basic and acidic residues. Ser423 carries the post-translational modification Phosphoserine. Thr453 carries the phosphothreonine modification. Phosphoserine occurs at positions 457, 463, 493, 511, 531, and 554. Positions 459–473 (EELRSPRGSVAERRR) are enriched in basic and acidic residues. The segment covering 510 to 522 (TSREELVRSHESL) has biased composition (basic and acidic residues). Composition is skewed to basic and acidic residues over residues 624-638 (PESR…KREP) and 663-680 (EKNR…RGPE). In terms of domain architecture, Ig-like 2 spans 727–817 (PVFEIPLQNM…ASCASSLAVR (91 aa)). Polar residues predominate over residues 820–830 (ASTSPFSSPIT). 3 Ig-like domains span residues 874-963 (PTFK…ARLE), 968-1056 (PESR…DELT), and 1069-1157 (PLFT…AQLY). Cys994 and Cys1046 form a disulfide bridge. Residues Ser1133 and Ser1177 each carry the phosphoserine modification. The disordered stretch occupies residues 1162-1185 (RTAASGPSSKLEKMPSIPEEPEHG). The Ig-like 6 domain maps to 1193–1283 (PDFLRPLQDL…AACYAHLYVT (91 aa)). Residues 1290–1387 (PDGAPQVVAV…PSEPVQLLEH (98 aa)) enclose the Fibronectin type-III 1 domain. A compositionally biased stretch (low complexity) spans 1367–1379 (SSGKSSSKPSAPS). The disordered stretch occupies residues 1367–1386 (SSGKSSSKPSAPSEPVQLLE). One can recognise an Ig-like 7 domain in the interval 1490–1578 (PRFESIMEDV…GEVSCKAELS (89 aa)). The region spanning 1606–1859 (YDIHQEIGRG…AEETLEHPWF (254 aa)) is the Protein kinase 1 domain. ATP contacts are provided by residues 1612–1620 (IGRGAFSYL) and Lys1635. Asp1724 (proton acceptor) is an active-site residue. Disordered regions lie at residues 1913–2244 (MPRR…QMPA), 2336–2451 (AKFK…SPVL), and 2463–2562 (RLSS…SQPN). Residues 1918–1927 (PPSGGLSSSS) are compositionally biased toward low complexity. A phosphoserine mark is found at Ser1993, Ser2004, Ser2019, Ser2020, and Ser2042. Over residues 2009–2019 (SPRRPELRRGS) the composition is skewed to basic and acidic residues. At Arg2060 the chain carries Asymmetric dimethylarginine; alternate. Position 2060 is an omega-N-methylarginine; alternate (Arg2060). Positions 2069–2081 (AQRLQALRQRLLR) are enriched in low complexity. Phosphoserine is present on residues Ser2114 and Ser2135. Arg2144 carries the post-translational modification Omega-N-methylarginine. The segment covering 2168-2179 (ESPSLSALSETQ) has biased composition (polar residues). The span at 2180–2189 (PPSPALPSAP) shows a compositional bias: pro residues. 2 positions are modified to phosphoserine: Ser2182 and Ser2207. Residues 2193–2207 (ITKSPEPSAATSRDS) show a composition bias toward polar residues. Positions 2208-2218 (PQPPAPQPVPE) are enriched in pro residues. Basic and acidic residues predominate over residues 2219-2229 (KIPEPKPEPVR). Residues 2230 to 2244 (AAKPAQPPLALQMPA) are compositionally biased toward low complexity. Over residues 2336–2345 (AKFKRSRESP) the composition is skewed to basic and acidic residues. Over residues 2346–2355 (LSRGLRLLSR) the composition is skewed to low complexity. Basic and acidic residues predominate over residues 2356–2372 (SRSEERGPFRGAEDDGI). At Ser2376 the chain carries Phosphoserine. At Thr2380 the chain carries Phosphothreonine. Over residues 2384-2395 (LVRRPERSRSVQ) the composition is skewed to basic and acidic residues. Ser2410, Ser2414, Ser2438, Ser2439, Ser2444, and Ser2448 each carry phosphoserine. The span at 2463 to 2484 (RLSSRLQRSGSSEDSGGASGRS) shows a compositional bias: low complexity. Polar residues predominate over residues 2510 to 2520 (QLASQTGATTP). Phosphoserine occurs at positions 2521 and 2524. Positions 2521-2540 (SAESLGSEASGTSGSSAPGE) are enriched in low complexity. A compositionally biased stretch (basic residues) spans 2543-2554 (SRHRWGLSRLRK). Phosphoserine is present on Ser2559. Positions 2583-2673 (PPVFHIKLKD…GSITSSCTVA (91 aa)) constitute an Ig-like 8 domain. A disulfide bridge connects residues Cys2605 and Cys2657. Residues 2680–2774 (KLAPPEVPQT…KVFIRGTQDS (95 aa)) form the Fibronectin type-III 2 domain. Thr2771 is modified (phosphothreonine). Disordered regions lie at residues 2771–2829 (TQDS…MSAN) and 2855–2957 (TQQA…PQKP). At Ser2774 the chain carries Phosphoserine. Residues 2793 to 2810 (RAPPPDSPTSLVPTPPLA) show a composition bias toward pro residues. Over residues 2814–2828 (SQASTLSPSTSSMSA) the composition is skewed to low complexity. The Fibronectin type-III 3 domain maps to 2859 to 2965 (EPSPPSILVT…KPYTFLEEKA (107 aa)). Over residues 2880-2907 (GTLTPTSSPQGVKPAPSSSSLYMVTSFV) the composition is skewed to polar residues. Pro residues predominate over residues 2910-2924 (PPDPQPPAPEPPPEP). The segment covering 2940-2950 (SSPTPESTTLR) has biased composition (polar residues). Ser2941 carries the phosphoserine modification. Residues 2958–3210 (YTFLEEKARG…LQDCLAHPWL (253 aa)) enclose the Protein kinase 2 domain. Residues 2964-2972 (KARGRFGVV) and Lys2987 each bind ATP. Asp3077 serves as the catalytic Proton acceptor.

Belongs to the protein kinase superfamily. CAMK Ser/Thr protein kinase family. In terms of assembly, interacts with MTM1. May be autophosphorylated. In terms of tissue distribution, isoform 2 is highly expressed in differentiated arterial smooth muscle cells (ASMC) in the medial layer of the aorta. Weakly detected in brain and testis and to a lesser extent in organs rich in striated muscle or visceral smooth muscle.

It is found in the nucleus. It catalyses the reaction L-seryl-[protein] + ATP = O-phospho-L-seryl-[protein] + ADP + H(+). The enzyme catalyses L-threonyl-[protein] + ATP = O-phospho-L-threonyl-[protein] + ADP + H(+). Its function is as follows. Isoform 2 may have a role in regulating the growth and differentiation of arterial smooth muscle cells. The polypeptide is Striated muscle-specific serine/threonine-protein kinase (Speg) (Rattus norvegicus (Rat)).